A 468-amino-acid polypeptide reads, in one-letter code: Chromosomal replication initiator protein DnaA (468 aa).

Positions 1-84 are domain I, interacts with DnaA modulators; the sequence is MSSSLWLQCL…RFEVGSKPIS (84 aa). The interval 84–131 is domain II; sequence SAPPRPQRTAADVAAATSAPAQMQARQSLHKPWESRGPEPVDDLNHRS. The disordered stretch occupies residues 112–132; that stretch reads LHKPWESRGPEPVDDLNHRSN. Over residues 114 to 129 the composition is skewed to basic and acidic residues; the sequence is KPWESRGPEPVDDLNH. Positions 132–348 are domain III, AAA+ region; the sequence is NVNPKHKFTN…GALNRVVANA (217 aa). Residues Gly176, Gly178, Lys179, and Thr180 each coordinate ATP. Residues 349-468 are domain IV, binds dsDNA; sequence NFTGRAITID…YSNLIRTLSS (120 aa).

This sequence belongs to the DnaA family. As to quaternary structure, oligomerizes as a right-handed, spiral filament on DNA at oriC.

Its subcellular location is the cytoplasm. Plays an essential role in the initiation and regulation of chromosomal replication. ATP-DnaA binds to the origin of replication (oriC) to initiate formation of the DNA replication initiation complex once per cell cycle. Binds the DnaA box (a 9 base pair repeat at the origin) and separates the double-stranded (ds)DNA. Forms a right-handed helical filament on oriC DNA; dsDNA binds to the exterior of the filament while single-stranded (ss)DNA is stabiized in the filament's interior. The ATP-DnaA-oriC complex binds and stabilizes one strand of the AT-rich DNA unwinding element (DUE), permitting loading of DNA polymerase. After initiation quickly degrades to an ADP-DnaA complex that is not apt for DNA replication. Binds acidic phospholipids. This Aliivibrio salmonicida (strain LFI1238) (Vibrio salmonicida (strain LFI1238)) protein is Chromosomal replication initiator protein DnaA.